Here is a 306-residue protein sequence, read N- to C-terminus: Non-specific ribonucleoside hydrolase RihC (306 aa).

Histidine 235 is an active-site residue.

Belongs to the IUNH family. RihC subfamily.

Its function is as follows. Hydrolyzes both purine and pyrimidine ribonucleosides with a broad-substrate specificity. This is Non-specific ribonucleoside hydrolase RihC from Salmonella paratyphi B (strain ATCC BAA-1250 / SPB7).